The sequence spans 119 residues: Achromolysin (119 aa).

This sequence belongs to the peptidase M4 family. The cofactor is Ca(2+). Zn(2+) serves as cofactor.

The protein localises to the secreted. Its function is as follows. Has staphylolytic activity. This chain is Achromolysin, found in Achromobacter lyticus.